Consider the following 338-residue polypeptide: UPF0252 protein PF1496 (338 aa).

The chain crosses the membrane as a helical span at residues 100-120 (ILSMLFLVFILFPAFTSHIWS).

The protein belongs to the UPF0252 family.

Its subcellular location is the membrane. This is UPF0252 protein PF1496 from Pyrococcus furiosus (strain ATCC 43587 / DSM 3638 / JCM 8422 / Vc1).